A 341-amino-acid chain; its full sequence is tRNA N6-adenosine threonylcarbamoyltransferase (341 aa).

2 residues coordinate Fe cation: histidine 111 and histidine 115. Substrate is bound by residues leucine 134–glycine 138, aspartate 167, glycine 180, and asparagine 276. A Fe cation-binding site is contributed by aspartate 304.

The protein belongs to the KAE1 / TsaD family. Fe(2+) is required as a cofactor.

The protein localises to the cytoplasm. The enzyme catalyses L-threonylcarbamoyladenylate + adenosine(37) in tRNA = N(6)-L-threonylcarbamoyladenosine(37) in tRNA + AMP + H(+). In terms of biological role, required for the formation of a threonylcarbamoyl group on adenosine at position 37 (t(6)A37) in tRNAs that read codons beginning with adenine. Is involved in the transfer of the threonylcarbamoyl moiety of threonylcarbamoyl-AMP (TC-AMP) to the N6 group of A37, together with TsaE and TsaB. TsaD likely plays a direct catalytic role in this reaction. This is tRNA N6-adenosine threonylcarbamoyltransferase from Pseudomonas syringae pv. syringae (strain B728a).